The chain runs to 70 residues: Small ribosomal subunit protein bS21C (70 aa).

Belongs to the bacterial ribosomal protein bS21 family.

In Burkholderia pseudomallei (strain 1710b), this protein is Small ribosomal subunit protein bS21C.